We begin with the raw amino-acid sequence, 504 residues long: Beta-xylosidase (504 aa).

The active-site Proton donor is E160. The Nucleophile role is filled by E280.

The protein belongs to the glycosyl hydrolase 39 family.

The catalysed reaction is Hydrolysis of (1-&gt;4)-beta-D-xylans, to remove successive D-xylose residues from the non-reducing termini.. The chain is Beta-xylosidase (xynB) from Geobacillus stearothermophilus (Bacillus stearothermophilus).